The following is a 215-amino-acid chain: ATP-dependent dethiobiotin synthetase BioD (215 aa).

13–18 contributes to the ATP binding site; the sequence is DIGKTV. Thr17 is a binding site for Mg(2+). Residue Lys38 is part of the active site. Thr42 serves as a coordination point for substrate. Residues Asp50, 115 to 118, and 175 to 176 each bind ATP; these read EGAG and NH. 2 residues coordinate Mg(2+): Asp50 and Glu115.

The protein belongs to the dethiobiotin synthetase family. As to quaternary structure, homodimer. Mg(2+) serves as cofactor.

It localises to the cytoplasm. It carries out the reaction (7R,8S)-7,8-diammoniononanoate + CO2 + ATP = (4R,5S)-dethiobiotin + ADP + phosphate + 3 H(+). It participates in cofactor biosynthesis; biotin biosynthesis; biotin from 7,8-diaminononanoate: step 1/2. Functionally, catalyzes a mechanistically unusual reaction, the ATP-dependent insertion of CO2 between the N7 and N8 nitrogen atoms of 7,8-diaminopelargonic acid (DAPA, also called 7,8-diammoniononanoate) to form a ureido ring. In Neisseria meningitidis serogroup C / serotype 2a (strain ATCC 700532 / DSM 15464 / FAM18), this protein is ATP-dependent dethiobiotin synthetase BioD.